The primary structure comprises 537 residues: Protein ST7 homolog (537 aa).

Residues 15 to 35 (FYVALTGTSSLISGLILIFEW) traverse the membrane as a helical segment. Positions 61 to 111 (SDGQSESSNGSGSSSSSGSSSSSNGGAGGGGSGGAGASGSGSATTSTGTQM) are disordered. Residues 67–84 (SSNGSGSSSSSGSSSSSN) show a composition bias toward low complexity. The segment covering 85–99 (GGAGGGGSGGAGASG) has biased composition (gly residues). Positions 100–109 (SGSATTSTGT) are enriched in low complexity. A helical membrane pass occupies residues 472 to 492 (LPFFILFTAGLCSITALLALA).

Belongs to the ST7 family.

It is found in the membrane. The chain is Protein ST7 homolog from Drosophila melanogaster (Fruit fly).